We begin with the raw amino-acid sequence, 661 residues long: DNA ligase (661 aa).

Residues 31–35 (DKEYD), 79–80 (SL), and glutamate 112 each bind NAD(+). Lysine 114 serves as the catalytic N6-AMP-lysine intermediate. Residues arginine 135, glutamate 169, lysine 281, and lysine 305 each contribute to the NAD(+) site. Cysteine 398, cysteine 401, cysteine 414, and cysteine 420 together coordinate Zn(2+). The region spanning 578 to 661 (QQENIFLGKT…ISEAEFEAML (84 aa)) is the BRCT domain.

This sequence belongs to the NAD-dependent DNA ligase family. LigA subfamily. The cofactor is Mg(2+). It depends on Mn(2+) as a cofactor.

It catalyses the reaction NAD(+) + (deoxyribonucleotide)n-3'-hydroxyl + 5'-phospho-(deoxyribonucleotide)m = (deoxyribonucleotide)n+m + AMP + beta-nicotinamide D-nucleotide.. Its function is as follows. DNA ligase that catalyzes the formation of phosphodiester linkages between 5'-phosphoryl and 3'-hydroxyl groups in double-stranded DNA using NAD as a coenzyme and as the energy source for the reaction. It is essential for DNA replication and repair of damaged DNA. The sequence is that of DNA ligase from Alkaliphilus oremlandii (strain OhILAs) (Clostridium oremlandii (strain OhILAs)).